The following is a 99-amino-acid chain: Nucleoid-associated protein SUB1611 (99 aa).

The protein belongs to the YbaB/EbfC family. Homodimer.

The protein resides in the cytoplasm. The protein localises to the nucleoid. Functionally, binds to DNA and alters its conformation. May be involved in regulation of gene expression, nucleoid organization and DNA protection. This chain is Nucleoid-associated protein SUB1611, found in Streptococcus uberis (strain ATCC BAA-854 / 0140J).